The chain runs to 291 residues: Formamidopyrimidine-DNA glycosylase (291 aa).

The Schiff-base intermediate with DNA role is filled by proline 2. The active-site Proton donor is the glutamate 3. Lysine 60 (proton donor; for beta-elimination activity) is an active-site residue. DNA-binding residues include histidine 97, arginine 116, and arginine 161. Residues 246–280 form an FPG-type zinc finger; it reads WVYNRAGEPCRVCGMPIQRIRLAGRSSHFCSECQT. The active-site Proton donor; for delta-elimination activity is the arginine 270.

It belongs to the FPG family. Monomer. Zn(2+) is required as a cofactor.

The enzyme catalyses Hydrolysis of DNA containing ring-opened 7-methylguanine residues, releasing 2,6-diamino-4-hydroxy-5-(N-methyl)formamidopyrimidine.. It catalyses the reaction 2'-deoxyribonucleotide-(2'-deoxyribose 5'-phosphate)-2'-deoxyribonucleotide-DNA = a 3'-end 2'-deoxyribonucleotide-(2,3-dehydro-2,3-deoxyribose 5'-phosphate)-DNA + a 5'-end 5'-phospho-2'-deoxyribonucleoside-DNA + H(+). Its function is as follows. Involved in base excision repair of DNA damaged by oxidation or by mutagenic agents. Acts as a DNA glycosylase that recognizes and removes damaged bases. Has a preference for oxidized purines, such as 7,8-dihydro-8-oxoguanine (8-oxoG). Has AP (apurinic/apyrimidinic) lyase activity and introduces nicks in the DNA strand. Cleaves the DNA backbone by beta-delta elimination to generate a single-strand break at the site of the removed base with both 3'- and 5'-phosphates. The protein is Formamidopyrimidine-DNA glycosylase of Nostoc punctiforme (strain ATCC 29133 / PCC 73102).